The chain runs to 205 residues: 3-demethoxyubiquinol 3-hydroxylase (205 aa).

Fe cation contacts are provided by E54, E84, H87, E136, E168, and H171.

This sequence belongs to the COQ7 family. It depends on Fe cation as a cofactor.

The protein localises to the cell membrane. It carries out the reaction a 5-methoxy-2-methyl-3-(all-trans-polyprenyl)benzene-1,4-diol + AH2 + O2 = a 3-demethylubiquinol + A + H2O. Its pathway is cofactor biosynthesis; ubiquinone biosynthesis. Its function is as follows. Catalyzes the hydroxylation of 2-nonaprenyl-3-methyl-6-methoxy-1,4-benzoquinol during ubiquinone biosynthesis. The polypeptide is 3-demethoxyubiquinol 3-hydroxylase (Delftia acidovorans (strain DSM 14801 / SPH-1)).